Reading from the N-terminus, the 246-residue chain is DNA polymerase sliding clamp (246 aa).

Belongs to the PCNA family. As to quaternary structure, homotrimer. The subunits circularize to form a toroid; DNA passes through its center. Replication factor C (RFC) is required to load the toroid on the DNA.

Sliding clamp subunit that acts as a moving platform for DNA processing. Responsible for tethering the catalytic subunit of DNA polymerase and other proteins to DNA during high-speed replication. The chain is DNA polymerase sliding clamp from Thermoplasma acidophilum (strain ATCC 25905 / DSM 1728 / JCM 9062 / NBRC 15155 / AMRC-C165).